The following is a 984-amino-acid chain: Putative formate dehydrogenase SAUSA300_2258 (984 aa).

The 2Fe-2S ferredoxin-type domain occupies 3 to 79; that stretch reads EHLVVTLDGK…PMTVNTVNND (77 aa). Positions 37, 48, 51, and 63 each coordinate [2Fe-2S] cluster. The 4Fe-4S His(Cys)3-ligated-type domain occupies 79–119; it reads DVKDAQKEALDRILEKHMLYCTVCDYNNGDCEIHNTMDAWG. Residues H95, C99, C102, C109, C147, C150, C153, C157, C190, C193, C196, C200, C264, C267, C271, and C299 each contribute to the [4Fe-4S] cluster site. 4Fe-4S ferredoxin-type domains lie at 138–165 and 181–211; these read PFYRYDPNQCILCGRCVEACQDIEVNET and NDVPINESSCVSCGQCATVCPCNAMMEVNME. A formate dehydrogenase region spans residues 252–984; sequence MRKERIKKTK…YVFPGNQVDK (733 aa). Residues 257 to 313 form the 4Fe-4S Mo/W bis-MGD-type domain; sequence IKKTKTVCTYCGVGCSFEVWTKDREILKVQPSHDSPANKIATCVKGKFSWGHINSDQ.

In the C-terminal section; belongs to the prokaryotic molybdopterin-containing oxidoreductase family. The cofactor is [2Fe-2S] cluster. Requires [4Fe-4S] cluster as cofactor. Mo-bis(molybdopterin guanine dinucleotide) is required as a cofactor.

It catalyses the reaction formate + NAD(+) = CO2 + NADH. This is Putative formate dehydrogenase SAUSA300_2258 from Staphylococcus aureus (strain USA300).